Consider the following 475-residue polypeptide: Phosphoethanolamine N-methyltransferase 1 (475 aa).

Belongs to the class I-like SAM-binding methyltransferase superfamily.

The catalysed reaction is phosphoethanolamine + S-adenosyl-L-methionine = N-methylethanolamine phosphate + S-adenosyl-L-homocysteine + H(+). The protein operates within phospholipid metabolism; phosphatidylcholine biosynthesis; phosphocholine from phosphoethanolamine. With respect to regulation, feedback inhibition by phosphatidylcholine. Catalyzes the first step in the synthesis of phosphocholine by converting phosphoethanolamine into phospho-monomethylethanolamine (N-methylethanolamine phosphate). Phosphocholine is a precursor for phosphatidylcholine, a major component in membranes and a precursor itself in the production of glycoconjugates secreted by parasitic nematodes to avoid host immune responses. This Caenorhabditis elegans protein is Phosphoethanolamine N-methyltransferase 1.